Here is a 424-residue protein sequence, read N- to C-terminus: Putative polyketide beta-ketoacyl synthase 2 (424 aa).

The Ketosynthase family 3 (KS3) domain occupies 13–416 (SRRAVVTGLG…GSNSALVLRR (404 aa)).

Belongs to the thiolase-like superfamily. Beta-ketoacyl-ACP synthases family.

Involved in developmentally regulated synthesis of a compound biosynthetically related to polyketide antibiotics which is essential for spore color in Streptomyces coelicolor. This Streptomyces coelicolor (strain ATCC BAA-471 / A3(2) / M145) protein is Putative polyketide beta-ketoacyl synthase 2.